A 311-amino-acid polypeptide reads, in one-letter code: Bifunctional protein FolD (311 aa).

NADP(+) is bound by residues 184–186 (GAS), I209, and I250.

This sequence belongs to the tetrahydrofolate dehydrogenase/cyclohydrolase family. As to quaternary structure, homodimer.

It carries out the reaction (6R)-5,10-methylene-5,6,7,8-tetrahydrofolate + NADP(+) = (6R)-5,10-methenyltetrahydrofolate + NADPH. It catalyses the reaction (6R)-5,10-methenyltetrahydrofolate + H2O = (6R)-10-formyltetrahydrofolate + H(+). Its pathway is one-carbon metabolism; tetrahydrofolate interconversion. Functionally, catalyzes the oxidation of 5,10-methylenetetrahydrofolate to 5,10-methenyltetrahydrofolate and then the hydrolysis of 5,10-methenyltetrahydrofolate to 10-formyltetrahydrofolate. This is Bifunctional protein FolD from Gluconacetobacter diazotrophicus (strain ATCC 49037 / DSM 5601 / CCUG 37298 / CIP 103539 / LMG 7603 / PAl5).